Here is a 165-residue protein sequence, read N- to C-terminus: Inorganic pyrophosphatase (165 aa).

Residues Lys-21, Arg-35, and Tyr-47 each coordinate substrate. Residues Asp-57, Asp-62, and Asp-94 each contribute to the Mg(2+) site. Residue Tyr-131 coordinates substrate.

This sequence belongs to the PPase family. As to quaternary structure, homohexamer. It depends on Mg(2+) as a cofactor.

The protein resides in the cytoplasm. It catalyses the reaction diphosphate + H2O = 2 phosphate + H(+). In terms of biological role, catalyzes the hydrolysis of inorganic pyrophosphate (PPi) forming two phosphate ions. The chain is Inorganic pyrophosphatase from Geobacillus stearothermophilus (Bacillus stearothermophilus).